A 209-amino-acid polypeptide reads, in one-letter code: Large ribosomal subunit protein uL3 (209 aa).

The segment at 126 to 165 (HNFGGGSRTHGQSDRLRAPGSVGGSSDPSRTFRGTRMAGR) is disordered.

It belongs to the universal ribosomal protein uL3 family. In terms of assembly, part of the 50S ribosomal subunit. Forms a cluster with proteins L14 and L19.

Its function is as follows. One of the primary rRNA binding proteins, it binds directly near the 3'-end of the 23S rRNA, where it nucleates assembly of the 50S subunit. This is Large ribosomal subunit protein uL3 from Chlorobium limicola (strain DSM 245 / NBRC 103803 / 6330).